We begin with the raw amino-acid sequence, 281 residues long: Probable thioesterase gloN (281 aa).

Residues 207-233 form a disordered region; that stretch reads LDDGSNNSRDLNETSPTETSNDSETQA. Over residues 210 to 232 the composition is skewed to polar residues; that stretch reads GSNNSRDLNETSPTETSNDSETQ.

Belongs to the AMT4 thioesterase family.

The protein operates within mycotoxin biosynthesis. Probable thioesterase; part of the gene cluster that mediates the biosynthesis of pneumocandins, lipohexapeptides of the echinocandin family that prevent fungal cell wall formation by non-competitive inhibition of beta-1,3-glucan synthase. The 10,12-dimethylmyristoyl side chain is synthesized by the reducing polyketide synthase gloL/GLPKS4. The thioesterase gloN/GLHYD exclusively interacts with gloL/GLPKS4 to maintain turnover of the polyketide side chain. The 10R,12S-dimethylmyristic acid is then transferred to the first thiolation domain of the nonribosomal peptide synthetase gloA/GLNRPS4 by the acyl-AMP ligase gloD/GLligase, followed by its acylation to L-ornithine to trigger elongation of the cyclic hexapeptide. L-ornithine, 4R-hydroxyl-L-proline (generated from L-proline by the dioxygenase gloF/GLOXY2), 3S-hydroxyl-L-homotyrosine (generated by gloG/GLHtyB, gloH/GLHtyA, gloI/GLHtyC, gloJ/GLHtyD and hydroxylated at C-3 by the dioxygenase gloM/GLOXY1), 3R-hydroxyl-L-glutamine (generated from L-glutamine probably by the dioxygenase gloE/GLOXY3) and 3S-hydroxyl-L-proline (generated from L-proline by the dioxygenase gloF/GLOXY2 to yield pneumocandin B0), or 3S-hydroxyl-4S-methyl-L-proline (generated from L-leucine by the dioxygenase gloC/GLOXY4 to yield pneumocandin A0) are sequentially added to the growing chain. The last C domain of gloA/GLNRPS4 is proposed to be responsible for cyclization by condensation to form the peptide bond between L-ornithine and 3S-hydroxyl-4S-methyl-L-proline (for pneumocandin A0) or 3S-hydroxyl-L-proline (for pneumocandin B0). Finally, the subsequent C-4 hydroxylation of 3S-hydroxyl-L-homotyrosine and L-ornithine dihydroxylation at C-4 and C-5 are performed by the cytochrome P450 monooxygenases gloP/GLP450-1 and gloO/GLP450-2, respectively. In Glarea lozoyensis (strain ATCC 20868 / MF5171), this protein is Probable thioesterase gloN.